The sequence spans 157 residues: Large ribosomal subunit protein eL21 (157 aa).

Residues 110-132 are disordered; sequence QANDQAKAEGNKAGKRVSTKRNP.

Belongs to the eukaryotic ribosomal protein eL21 family.

This chain is Large ribosomal subunit protein eL21 (RPL21), found in Tetrahymena thermophila (strain SB210).